A 548-amino-acid chain; its full sequence is MAAKDVKFSTDARDRLLRGVDILANAVKVTLGPKGRNVVLDKSYGAPRITKDGVSVAKEIELKDKFENMGAQMVKEVASKSADVAGDGTTTATVLAQAIVREGVKSVAAGMNPMDLKRGIDLAVLAVVEDVKKRSKKIKTSAEVAQVGTISANGDEEVGKIIATAMEKVGNEGVITVEEAKGLDTELDVVEGMQFDRGYLSPYFVTNAEKMVADLENPYILLHEKKLSGLQALLPVLEAVVQSSRPLLIIAEDVEGEALATLVVNKLRGGLKVAAVKAPGFGDRRKAMLEDIAILTGGQVISEDLGIKLENVTIDMLGTAKKVTITKEETTLVDGAGDKKDIEARCSQIRANIEDTSSDYDREKLQERLAKLAGGVAVIKVGGATETEVKEKKDRVDDAMHATRAAVEEGVVAGGGVALLHAIRSLDSVKGANPDQNVGIEIVRRALQAPVRQIAENAGVDGAVVAGKLLENSDTDFGYNAQTGIYENLVTAGVIDPTKVVRAALQGAASIAGLLITTEAMVAEIPEKKDAMPSPDMGGMGGMGGMGF.

Residues 30-33 (TLGP), Lys-51, 87-91 (DGTTT), Gly-415, and Asp-496 contribute to the ATP site. Residues 529–548 (KDAMPSPDMGGMGGMGGMGF) form a disordered region. The segment covering 538-548 (GGMGGMGGMGF) has biased composition (gly residues).

This sequence belongs to the chaperonin (HSP60) family. Forms a cylinder of 14 subunits composed of two heptameric rings stacked back-to-back. Interacts with the co-chaperonin GroES.

The protein localises to the cytoplasm. The catalysed reaction is ATP + H2O + a folded polypeptide = ADP + phosphate + an unfolded polypeptide.. Functionally, together with its co-chaperonin GroES, plays an essential role in assisting protein folding. The GroEL-GroES system forms a nano-cage that allows encapsulation of the non-native substrate proteins and provides a physical environment optimized to promote and accelerate protein folding. This Rhodospirillum rubrum (strain ATCC 11170 / ATH 1.1.1 / DSM 467 / LMG 4362 / NCIMB 8255 / S1) protein is Chaperonin GroEL 2.